Reading from the N-terminus, the 772-residue chain is Transcription factor sdnS (772 aa).

Positions 23–53 form a DNA-binding region, zn(2)-C6 fungal-type; sequence CWECRRRKIRCQFGAGNDTVCLPCQARGSTC. 2 disordered regions span residues 94-121 and 156-180; these read EAGGQLANRSTTQSNRGSRSPSPDSAQN and ASMLTPESDHSPAPSKLTPSRNSKT. Residues 100–121 are compositionally biased toward polar residues; it reads ANRSTTQSNRGSRSPSPDSAQN.

It is found in the nucleus. It participates in antibiotic biosynthesis. Functionally, transcription factor; part of the gene cluster that mediates the biosynthesis of sordarin and hypoxysordarin, glycoside antibiotics with a unique tetracyclic diterpene aglycone structure. First, the geranylgeranyl diphosphate synthase sdnC constructs GGDP from farnesyl diphosphate and isopentenyl diphosphate. The diterpene cyclase sdnA then catalyzes the cyclization of GGDP to afford cycloaraneosene. Cycloaraneosene is then hydroxylated four times by the putative cytochrome P450 monooxygenases sdnB, sdnE, sdnF and sdnH to give a hydroxylated cycloaraneosene derivative such as cycloaraneosene-8,9,13,19-tetraol. Although the order of the hydroxylations is unclear, at least C8, C9 and C13 of the cycloaraneosene skeleton are hydroxylated before the sordaricin formation. Dehydration of the 13-hydroxy group of the hydroxylated cycloaraneosene derivative might be catalyzed by an unassigned hypothetical protein such as sdnG and sdnP to construct the cyclopentadiene moiety. The FAD-dependent oxidoreductase sdnN is proposed to catalyze the oxidation at C9 of the hydroxylated cycloaraneosene derivative and also catalyze the Baeyer-Villiger oxidation to give the lactone intermediate. The presumed lactone intermediate would be hydrolyzed to give an acrolein moiety and a carboxylate moiety. Then, [4+2]cycloaddition would occur between the acrolein moiety and the cyclopentadiene moiety to give sordaricin. SdnN might also be involved in the [4+2]cycloaddition after the hypothesized oxidation to accommodate the oxidized product and prompt the [4+2]cycloaddition. GDP-6-deoxy-D-altrose may be biosynthesized from GDP-D-mannose by the putative GDP-mannose-4,6-dehydratase sdnI and the short-chain dehydrogenase sdnK. The glycosyltransferase sdnJ catalyzes the attachment of 6-deoxy-D-altrose onto the 19-hydroxy group of sordaricin to give 4'-O-demethylsordarin. The methyltransferase sdnD would complete the biosynthesis of sordarin. Sordarin can be further modified into hypoxysordarin. The unique acyl chain at the 3'-hydroxy group of hypoxysordarin would be constructed by an iterative type I PKS sdnO and the trans-acting polyketide methyltransferase sdnL. SdnL would be responsible for the introduction of an alpha-methyl group of the polyketide chain. Alternatively, the beta-lactamase-like protein sdnR might be responsible for the cleavage and transfer of the polyketide chain from the PKS sdnO to sordarin. Two putative cytochrome P450 monooxygenases, sdnQ and sdnT, might catalyze the epoxidations of the polyketide chain to complete the biosynthesis of hypoxysordarin. Transcriptional regulators sdnM and sdnS are presumably encoded for the transcriptional regulation of the expression of the sdn gene cluster. This chain is Transcription factor sdnS, found in Sordaria araneosa (Pleurage araneosa).